The following is a 395-amino-acid chain: uncharacterized protein (395 aa).

A coiled-coil region spans residues 288–318; it reads VAKGKEIDNAEIEKTIKEYENIEEGIEDIVK.

This is an uncharacterized protein from Ostreid herpesvirus 1 (isolate France) (OsHV-1).